We begin with the raw amino-acid sequence, 223 residues long: Urease accessory protein UreG (223 aa).

The segment at 1-31 is disordered; the sequence is MAKHSHDHTHDHHDRPRRVRKPGEPLRIGVG. 32–39 is a binding site for GTP; it reads GPVGSGKT.

It belongs to the SIMIBI class G3E GTPase family. UreG subfamily. As to quaternary structure, homodimer. UreD, UreF and UreG form a complex that acts as a GTP-hydrolysis-dependent molecular chaperone, activating the urease apoprotein by helping to assemble the nickel containing metallocenter of UreC. The UreE protein probably delivers the nickel.

It localises to the cytoplasm. Functionally, facilitates the functional incorporation of the urease nickel metallocenter. This process requires GTP hydrolysis, probably effectuated by UreG. The chain is Urease accessory protein UreG from Mycobacterium marinum (strain ATCC BAA-535 / M).